A 427-amino-acid chain; its full sequence is MGSVRTNRYSIVSSEEDGMKLATMAVANGFGNGKSKVHTRQQCRSRFVKKDGHCNVQFINVGEKGQRYLADIFTTCVDIRWRWMLVIFCLAFVLSWLFFGCVFWLIALLHGDLDASRESKACVSEVNSFTAAFLFSIETQTTIGYGFRCVTDECPVAVFMVVFQSIVGCIIDAFIIGAVMAKMAKPKKRNETLVFSHNAVIAMRDGKLCLMWRVGNLRKSHLVEAHVRAQLLKSRITSEGEYIPLDQIDINVGFDSGIDRIFLVSPITIVHEIDEDSPLYDLSKQDMDNADFEIVVILEGMVEATAMTTQCRSSYLANEILWGHRYEPVLFEEKHYYKVDYSRFHKTYEVPNTPLCSARDLAEKKYILSNANSFCYENEVALTSKEEDDSENGVPESTSTDTPPDIDLHNQASVPLEPRPLRRESEI.

Residues 1–81 lie on the Cytoplasmic side of the membrane; that stretch reads MGSVRTNRYS…IFTTCVDIRW (81 aa). At Cys76 the chain carries S-nitrosocysteine. The chain crosses the membrane as a helical span at residues 82-106; sequence RWMLVIFCLAFVLSWLFFGCVFWLI. Topologically, residues 107–128 are extracellular; that stretch reads ALLHGDLDASRESKACVSEVNS. The helical; Pore-forming intramembrane region spans 129–140; the sequence is FTAAFLFSIETQ. The segment at residues 141 to 147 is an intramembrane region (pore-forming); sequence TTIGYGF. Positions 142 to 147 match the Selectivity filter motif; it reads TIGYGF. The Extracellular segment spans residues 148-156; that stretch reads RCVTDECPV. A helical membrane pass occupies residues 157-178; it reads AVFMVVFQSIVGCIIDAFIIGA. At 179–427 the chain is on the cytoplasmic side; the sequence is VMAKMAKPKK…PRPLRRESEI (249 aa). Residues 181–208 form a polyphosphoinositide (PIP2)-binding region; sequence AKMAKPKKRNETLVFSHNAVIAMRDGKL. A disordered region spans residues 384 to 427; it reads SKEEDDSENGVPESTSTDTPPDIDLHNQASVPLEPRPLRRESEI. A PDZ-binding motif is present at residues 425 to 427; sequence SEI.

The protein belongs to the inward rectifier-type potassium channel (TC 1.A.2.1) family. KCNJ2 subfamily. Homotetramer. Homomultimeric and heteromultimeric association with KCNJ4/Kir2.3. Can form heteromeric channels with Kir2.6/KCNJ18. Associates, via its PDZ-recognition domain, with a complex containing LIN7A, LIN7B, LIN7C, DLG1, CASK and APBA1. S-nitrosylation increases the open probability and inward rectifying currents. In terms of tissue distribution, highly expressed in the ventricle and skeletal muscle, moderately in cerebrum and cerebellum. Only low levels are detected in kidney or lung.

Its subcellular location is the cell membrane. The protein localises to the sarcolemma. It is found in the T-tubule. The catalysed reaction is K(+)(in) = K(+)(out). Activated by phosphatidylinositol 4,5 biphosphate (PtdIns(4,5)P2). Inward rectifier potassium channels are characterized by a greater tendency to allow potassium to flow into the cell rather than out of it. Their voltage dependence is regulated by the concentration of extracellular potassium; as external potassium is raised, the voltage range of the channel opening shifts to more positive voltages. The inward rectification is mainly due to the blockage of outward current by internal magnesium. Can be blocked by extracellular barium and cesium. Probably participates in establishing action potential waveform and excitability of neuronal and muscle tissues. In Oryctolagus cuniculus (Rabbit), this protein is Inward rectifier potassium channel 2 (KCNJ2).